The primary structure comprises 492 residues: Uridine-cytidine kinase D (492 aa).

Residues 36 to 56 (PLPKNKKDHDQSIESDSSFTR) form a disordered region. 117 to 124 (GPVGAGKT) is a binding site for ATP. In terms of domain architecture, CYTH spans 290–460 (EPVYVCKAKY…PQTFLYLYFK (171 aa)). Residues 468–483 (PNYSKLKPNNTNSKIL) show a composition bias toward low complexity. A disordered region spans residues 468 to 492 (PNYSKLKPNNTNSKILKNNKDKKNL).

This sequence belongs to the uridine kinase family.

It carries out the reaction uridine + ATP = UMP + ADP + H(+). The catalysed reaction is cytidine + ATP = CMP + ADP + H(+). It participates in pyrimidine metabolism; CTP biosynthesis via salvage pathway; CTP from cytidine: step 1/3. It functions in the pathway pyrimidine metabolism; UMP biosynthesis via salvage pathway; UMP from uridine: step 1/1. Catalyzes the conversion of uridine into uridine monophosphate and cytidine into cytidine monophosphate in the pyrimidine salvage pathway. The chain is Uridine-cytidine kinase D (udkD) from Dictyostelium discoideum (Social amoeba).